Here is a 956-residue protein sequence, read N- to C-terminus: Phosphatidylinositol 4-kinase PIK1a (956 aa).

Positions 1 to 120 constitute a PIK helical domain; the sequence is MPVAPHELRD…QTVRKFINKL (120 aa). Residues 545–573 are disordered; it reads SRDWAKSTPGSPVARSSQEDEKFYGNVSS. The PI3K/PI4K catalytic domain occupies 658 to 939; the sequence is EDWNEKKHRI…YLIEKSVGSM (282 aa). The interval 664 to 670 is G-loop; that stretch reads KHRIRKS. The segment at 805-813 is catalytic loop; sequence QIKDRHNGN. The tract at residues 824–848 is activation loop; it reads HIDFGFLLSNSPGSVGFEAAPFKLT.

It belongs to the PI3/PI4-kinase family. Type III PI4K subfamily.

It localises to the nucleus. It carries out the reaction a 1,2-diacyl-sn-glycero-3-phospho-(1D-myo-inositol) + ATP = a 1,2-diacyl-sn-glycero-3-phospho-(1D-myo-inositol 4-phosphate) + ADP + H(+). In terms of biological role, acts on phosphatidylinositol (PI) in the first committed step in the production of the second messenger inositol 1,4,5,-trisphosphate. The chain is Phosphatidylinositol 4-kinase PIK1a (PIKA) from Candida albicans (strain SC5314 / ATCC MYA-2876) (Yeast).